Reading from the N-terminus, the 1749-residue chain is Kinase non-catalytic C-lobe domain-containing protein 1 (1749 aa).

The KIND 1 domain maps to 37–217 (VSLADILSLR…QDVSESSWRE (181 aa)). Disordered stretches follow at residues 210–275 (VSES…SHSR) and 361–435 (CRLW…ARQL). Basic and acidic residues-rich tracts occupy residues 363–373 (LWPEQEPEHQL) and 410–430 (ADPRDASGEAQTPRDDERIPE). Residues 444–608 (VSLQDLLSQL…RASICQVYQE (165 aa)) form the KIND 2 domain. Disordered stretches follow at residues 689-871 (ARDQ…RPAD) and 962-1061 (QASP…GGAS). A compositionally biased stretch (basic and acidic residues) spans 702–717 (ERGGQREGEGEEKLSL). 2 stretches are compositionally biased toward low complexity: residues 739 to 748 (QGAAPEPLGA) and 766 to 779 (PANQPEGASSAAPG). Over residues 823-833 (HGPRHPPKPPR) the composition is skewed to basic residues. Residues 853 to 871 (GERDDQSPDSVPERPRPAD) are compositionally biased toward basic and acidic residues. Position 964 is a phosphoserine (Ser-964). The segment covering 980–990 (SQSPRSPSSKR) has biased composition (low complexity). Residues 1005-1019 (RTSSRAPCSPTSVSD) show a composition bias toward polar residues. Residues 1040-1056 (VKAERAQQPEAGEDRRP) show a composition bias toward basic and acidic residues. A coiled-coil region spans residues 1133–1190 (QQLMMEKRNYRKTLKFYQKLLQKEKRNKGSDVKTMLSKLKGQLEEMKSRVQFLSLVKK). Residues 1246–1371 (KARILQAGTP…HLLGLLEVGM (126 aa)) enclose the N-terminal Ras-GEF domain. The Ras-GEF domain occupies 1468 to 1719 (STHQLFSQLT…SGADISTLAA (252 aa)).

Interacts (via KIND2) with MAP2; the interaction enhances MAP2 phosphorylation and localizes KNDC1 to dendrites. As to expression, expressed specifically in the cerebral cortex.

It is found in the cell projection. It localises to the dendrite. The protein resides in the perikaryon. Its function is as follows. RAS-Guanine nucleotide exchange factor (GEF) that controls the negative regulation of neuronal dendrite growth by mediating a signaling pathway linking RAS and MAP2. May be involved in cellular senescence. The chain is Kinase non-catalytic C-lobe domain-containing protein 1 from Homo sapiens (Human).